The following is a 365-amino-acid chain: Aminomethyltransferase (365 aa).

Belongs to the GcvT family. The glycine cleavage system is composed of four proteins: P, T, L and H.

The catalysed reaction is N(6)-[(R)-S(8)-aminomethyldihydrolipoyl]-L-lysyl-[protein] + (6S)-5,6,7,8-tetrahydrofolate = N(6)-[(R)-dihydrolipoyl]-L-lysyl-[protein] + (6R)-5,10-methylene-5,6,7,8-tetrahydrofolate + NH4(+). Functionally, the glycine cleavage system catalyzes the degradation of glycine. This Desulfitobacterium hafniense (strain Y51) protein is Aminomethyltransferase.